The primary structure comprises 762 residues: Phosphoribosylformylglycinamidine synthase subunit PurL (762 aa).

Residue His-58 is part of the active site. The ATP site is built by Tyr-61 and Lys-105. Glu-107 lines the Mg(2+) pocket. Residues 108 to 111 (SHNH) and Arg-130 contribute to the substrate site. His-109 serves as the catalytic Proton acceptor. Asp-131 contributes to the Mg(2+) binding site. Residue Gln-260 coordinates substrate. Asp-288 provides a ligand contact to Mg(2+). Residue 332 to 334 (ESQ) coordinates substrate. Residues Asn-520 and Gly-557 each contribute to the ATP site. A Mg(2+)-binding site is contributed by Asn-558. Ser-560 contacts substrate.

It belongs to the FGAMS family. In terms of assembly, monomer. Part of the FGAM synthase complex composed of 1 PurL, 1 PurQ and 2 PurS subunits.

The protein localises to the cytoplasm. The catalysed reaction is N(2)-formyl-N(1)-(5-phospho-beta-D-ribosyl)glycinamide + L-glutamine + ATP + H2O = 2-formamido-N(1)-(5-O-phospho-beta-D-ribosyl)acetamidine + L-glutamate + ADP + phosphate + H(+). Its pathway is purine metabolism; IMP biosynthesis via de novo pathway; 5-amino-1-(5-phospho-D-ribosyl)imidazole from N(2)-formyl-N(1)-(5-phospho-D-ribosyl)glycinamide: step 1/2. Part of the phosphoribosylformylglycinamidine synthase complex involved in the purines biosynthetic pathway. Catalyzes the ATP-dependent conversion of formylglycinamide ribonucleotide (FGAR) and glutamine to yield formylglycinamidine ribonucleotide (FGAM) and glutamate. The FGAM synthase complex is composed of three subunits. PurQ produces an ammonia molecule by converting glutamine to glutamate. PurL transfers the ammonia molecule to FGAR to form FGAM in an ATP-dependent manner. PurS interacts with PurQ and PurL and is thought to assist in the transfer of the ammonia molecule from PurQ to PurL. This is Phosphoribosylformylglycinamidine synthase subunit PurL from Rhodococcus erythropolis (strain PR4 / NBRC 100887).